The sequence spans 119 residues: Large ribosomal subunit protein uL18 (119 aa).

This sequence belongs to the universal ribosomal protein uL18 family. As to quaternary structure, part of the 50S ribosomal subunit; part of the 5S rRNA/L5/L18/L25 subcomplex. Contacts the 5S and 23S rRNAs.

This is one of the proteins that bind and probably mediate the attachment of the 5S RNA into the large ribosomal subunit, where it forms part of the central protuberance. The sequence is that of Large ribosomal subunit protein uL18 from Cereibacter sphaeroides (strain ATCC 17029 / ATH 2.4.9) (Rhodobacter sphaeroides).